The sequence spans 475 residues: ATP synthase subunit beta 1 (475 aa).

153 to 160 serves as a coordination point for ATP; it reads GGAGVGKT.

Belongs to the ATPase alpha/beta chains family. In terms of assembly, F-type ATPases have 2 components, CF(1) - the catalytic core - and CF(0) - the membrane proton channel. CF(1) has five subunits: alpha(3), beta(3), gamma(1), delta(1), epsilon(1). CF(0) has three main subunits: a(1), b(2) and c(9-12). The alpha and beta chains form an alternating ring which encloses part of the gamma chain. CF(1) is attached to CF(0) by a central stalk formed by the gamma and epsilon chains, while a peripheral stalk is formed by the delta and b chains.

It localises to the cell membrane. It carries out the reaction ATP + H2O + 4 H(+)(in) = ADP + phosphate + 5 H(+)(out). Produces ATP from ADP in the presence of a proton gradient across the membrane. The catalytic sites are hosted primarily by the beta subunits. This chain is ATP synthase subunit beta 1, found in Mycoplasmopsis pulmonis (strain UAB CTIP) (Mycoplasma pulmonis).